Here is a 623-residue protein sequence, read N- to C-terminus: Quinoprotein ethanol dehydrogenase (623 aa).

Residues 1-34 (MTIRSLPAALSPLSMAVQAVLLVSSLALAPAANA) form the signal peptide. Ca(2+) is bound by residues D45 and N51. A pyrroloquinoline quinone-binding site is contributed by E95. The cysteines at positions 139 and 140 are disulfide-linked. Pyrroloquinoline quinone-binding positions include R145, T189, and 207-209 (HGS). Position 213 (E213) interacts with Ca(2+). The tract at residues 242-279 (GRLNGKDSTPTGDVKAPSWPDDPTTETGKVESWSHGGG) is disordered. Ca(2+) is bound by residues N300 and D350. D350 acts as the Proton acceptor in catalysis. R378 is a binding site for pyrroloquinoline quinone. Residues 414–436 (RPVENEGQRPAKPLPGETKGKPV) are disordered. WD repeat units lie at residues 515-556 (EHNE…ELWK) and 559-601 (TGSG…LTKP). Pyrroloquinoline quinone contacts are provided by W523 and A587.

The protein belongs to the bacterial PQQ dehydrogenase family. Homodimer. Pyrroloquinoline quinone is required as a cofactor. It depends on Ca(2+) as a cofactor.

Its subcellular location is the periplasm. It catalyses the reaction a primary alcohol + 2 Fe(III)-[cytochrome c] = an aldehyde + 2 Fe(II)-[cytochrome c] + 2 H(+). It carries out the reaction ethanol + 2 Fe(III)-[cytochrome c] = acetaldehyde + 2 Fe(II)-[cytochrome c] + 2 H(+). The catalysed reaction is ethanol + A = acetaldehyde + AH2. The enzyme catalyses 1-propanol + 2 Fe(III)-[cytochrome c] = propanal + 2 Fe(II)-[cytochrome c] + 2 H(+). It functions in the pathway alcohol metabolism; ethanol degradation; acetate from ethanol: step 1/2. Enhanced by the presence of ethylamine or NH4(+) ions. Catalyzes the oxidation of ethanol and other primary alcohols to the corresponding aldehydes, except methanol, which is not a substrate. Uses a specific inducible cytochrome c550, encoded by the adjacent gene in the locus, as electron acceptor. Is a key enzyme of the carbon and energy metabolism during growth of P.putida on ethanol as the sole carbon and energy source. Displays lower activity on secondary alcohols, aldehydes and diols. Is not active with sugar alcohols such as glycerol and D-sorbitol. In vitro, reacts well with phenazine methosulfate (PMS) as an electron acceptor but not with NAD(P), potassium ferricyanide, or molecular oxygen. The sequence is that of Quinoprotein ethanol dehydrogenase from Pseudomonas putida (Arthrobacter siderocapsulatus).